Consider the following 612-residue polypeptide: 1,8-cineole synthase, chloroplastic (612 aa).

The transit peptide at 1-52 directs the protein to the chloroplast; that stretch reads MALVCGAPLASRSCLNKSLISSTHELKPLRRTILPTLRWKSATPSINMCLTT. 3 residues coordinate Mg(2+): D363, D367, and D515. The DDXXD motif signature appears at 363 to 367; the sequence is DDIYD.

It belongs to the terpene synthase family. Tpsd subfamily. The cofactor is Mg(2+). It depends on Mn(2+) as a cofactor.

It is found in the plastid. It localises to the chloroplast. The catalysed reaction is (2E)-geranyl diphosphate + H2O = 1,8-cineole + diphosphate. It participates in terpene metabolism; oleoresin biosynthesis. In terms of biological role, terpene synthase (TPS) involved in the biosynthesis of monoterpene natural products included in conifer oleoresin secretions and volatile emissions; these compounds contribute to biotic and abiotic stress defense against herbivores and pathogens. Catalyzes the conversion of (2E)-geranyl diphosphate (GPP) to 1,8-cineole. This Picea glauca (White spruce) protein is 1,8-cineole synthase, chloroplastic.